Consider the following 95-residue polypeptide: Aspartyl/glutamyl-tRNA(Asn/Gln) amidotransferase subunit C (95 aa).

This sequence belongs to the GatC family. In terms of assembly, heterotrimer of A, B and C subunits.

It catalyses the reaction L-glutamyl-tRNA(Gln) + L-glutamine + ATP + H2O = L-glutaminyl-tRNA(Gln) + L-glutamate + ADP + phosphate + H(+). It carries out the reaction L-aspartyl-tRNA(Asn) + L-glutamine + ATP + H2O = L-asparaginyl-tRNA(Asn) + L-glutamate + ADP + phosphate + 2 H(+). Allows the formation of correctly charged Asn-tRNA(Asn) or Gln-tRNA(Gln) through the transamidation of misacylated Asp-tRNA(Asn) or Glu-tRNA(Gln) in organisms which lack either or both of asparaginyl-tRNA or glutaminyl-tRNA synthetases. The reaction takes place in the presence of glutamine and ATP through an activated phospho-Asp-tRNA(Asn) or phospho-Glu-tRNA(Gln). The polypeptide is Aspartyl/glutamyl-tRNA(Asn/Gln) amidotransferase subunit C (Nitrobacter winogradskyi (strain ATCC 25391 / DSM 10237 / CIP 104748 / NCIMB 11846 / Nb-255)).